A 445-amino-acid polypeptide reads, in one-letter code: UPF0210 protein SP_0239 (445 aa).

It belongs to the UPF0210 family. Homodimer.

The polypeptide is UPF0210 protein SP_0239 (Streptococcus pneumoniae serotype 4 (strain ATCC BAA-334 / TIGR4)).